The following is a 257-amino-acid chain: DNA repair protein RecO (257 aa).

Belongs to the RecO family.

In terms of biological role, involved in DNA repair and RecF pathway recombination. This chain is DNA repair protein RecO, found in Variovorax paradoxus (strain S110).